A 313-amino-acid chain; its full sequence is Pyrimidine-specific ribonucleoside hydrolase RihB (313 aa).

Catalysis depends on Asp-11, which acts as the Proton acceptor. Ca(2+) is bound by residues Asp-11, Asp-16, and Val-124. Gln-227 and His-239 together coordinate substrate. Asp-240 is a binding site for Ca(2+).

The protein belongs to the IUNH family. RihB subfamily. In terms of assembly, homotetramer. Ca(2+) is required as a cofactor.

The enzyme catalyses a pyrimidine ribonucleoside + H2O = a pyrimidine nucleobase + D-ribose. Functionally, hydrolyzes cytidine or uridine to ribose and cytosine or uracil, respectively. Has a clear preference for cytidine over uridine. Strictly specific for ribonucleosides. The chain is Pyrimidine-specific ribonucleoside hydrolase RihB from Escherichia coli O9:H4 (strain HS).